Consider the following 147-residue polypeptide: Transcription antitermination protein NusB (147 aa).

Belongs to the NusB family.

In terms of biological role, involved in transcription antitermination. Required for transcription of ribosomal RNA (rRNA) genes. Binds specifically to the boxA antiterminator sequence of the ribosomal RNA (rrn) operons. This chain is Transcription antitermination protein NusB, found in Teredinibacter turnerae (strain ATCC 39867 / T7901).